Here is an 816-residue protein sequence, read N- to C-terminus: MGNYSTAIDKKWQDKWAESGLYKFDPNKEGEKLYVLEMFSYPSGSQLHAGHWFNYGPVDSWARFKRMQGYNVFQPMGFDAFGLPAENFAIKTGIHPQDSTIKNIAKMEEQLKAMGAMFNWENEVVTCSPEYYKWTQWLFLKLYEKGLAYRKKAPVNWCPSCQTVLANEQVVDGACERCSTEVTKKDLTQWFFKITDYADELLDKLDGLDWPEKTVSMQKHWIGRSTGSQVNFKVKDSDLNFDVFTTRVDTLCGVSYVVLAPENPLVDEIVSAEQKEAVENYKEEAKKQSDIERQSISREKTGVFTGAYAIHPLTGKEVPIWVGDYVLATYGTGAVMAVPAHDERDFAFAEKFNLPINRVIEAKDGSETNLPFCEHGILVNSGEFDGLTTDEAKEKIVEKLSSMGLGEKKVNFRLRDWLVSRQRYWGAPIPVVYCEECGIVPVPESQLPVELPYDVEFAPDGKSPLAKSEAFVNTTCPHCGKPAKRETDTLDTFVCSSWYYLRYPDNKNTEAPFNPELINKMLPVDKYVGGPEHACMHLLYARFITKALRDMGYLNFDEPFTSLTHQGLILGPDGLKMSKSKGNTISPDDYIKEYGADVFRMYLMFGFAYTEGGAWSDDGIKSVNRFVERIERIIDTAREAISKGENNKTTMDKAEKELNYWRHNTIKSVTDDTDKLQFNTAIARMMEFINALSKYTQEKEMNLDFLKDVVSDYLRLLAPFAPHFSEEQWNLLGNSYSIFNEAWPKFDPKALVKDEVEIAIQVNGKIKNKIMVSSDLDEEGIKAAALADEKIIASTEGKTVVKVIVIKGRLVNIVVK.

The 'HIGH' region signature appears at 40 to 51; that stretch reads SYPSGSQLHAGH. Positions 576–580 match the 'KMSKS' region motif; it reads KMSKS. Lysine 579 contributes to the ATP binding site.

This sequence belongs to the class-I aminoacyl-tRNA synthetase family.

It localises to the cytoplasm. It carries out the reaction tRNA(Leu) + L-leucine + ATP = L-leucyl-tRNA(Leu) + AMP + diphosphate. This Clostridium perfringens (strain 13 / Type A) protein is Leucine--tRNA ligase.